Here is a 246-residue protein sequence, read N- to C-terminus: Triosephosphate isomerase (246 aa).

9-11 (NWK) serves as a coordination point for substrate. H99 serves as the catalytic Electrophile. E168 (proton acceptor) is an active-site residue. Residues G174, S207, and 228-229 (GG) each bind substrate.

It belongs to the triosephosphate isomerase family. As to quaternary structure, homodimer.

It is found in the cytoplasm. The enzyme catalyses D-glyceraldehyde 3-phosphate = dihydroxyacetone phosphate. It participates in carbohydrate biosynthesis; gluconeogenesis. It functions in the pathway carbohydrate degradation; glycolysis; D-glyceraldehyde 3-phosphate from glycerone phosphate: step 1/1. Involved in the gluconeogenesis. Catalyzes stereospecifically the conversion of dihydroxyacetone phosphate (DHAP) to D-glyceraldehyde-3-phosphate (G3P). This chain is Triosephosphate isomerase, found in Prochlorococcus marinus (strain NATL2A).